We begin with the raw amino-acid sequence, 119 residues long: Fluoride-specific ion channel FluC 1 (119 aa).

The next 4 helical transmembrane spans lie at 2–22 (TGAVAPPAVLVAAGGALGAVL), 37–57 (AGTLVVNVVGSFVLAALTFAA), 62–82 (TMLLFGTGACGAFTTFASFSV), and 99–119 (HALGNLLGAGLAVALAWLLVA). Na(+)-binding residues include glycine 72 and threonine 75.

It belongs to the fluoride channel Fluc/FEX (TC 1.A.43) family.

The protein resides in the cell membrane. It catalyses the reaction fluoride(in) = fluoride(out). With respect to regulation, na(+) is not transported, but it plays an essential structural role and its presence is essential for fluoride channel function. In terms of biological role, fluoride-specific ion channel. Important for reducing fluoride concentration in the cell, thus reducing its toxicity. This is Fluoride-specific ion channel FluC 1 from Halobacterium salinarum (strain ATCC 700922 / JCM 11081 / NRC-1) (Halobacterium halobium).